The following is a 261-amino-acid chain: Adenosylcobinamide-GDP ribazoletransferase (261 aa).

Transmembrane regions (helical) follow at residues 9–29 (LELF…VSLP), 41–61 (YFAL…SLAT), 64–84 (FSTN…TGAF), 114–134 (IGTY…LLLT), 141–161 (SLVP…ASLI), 196–216 (ATLL…SLIF), and 235–255 (CLGA…LAFL).

It belongs to the CobS family. Mg(2+) serves as cofactor.

The protein resides in the cell inner membrane. The enzyme catalyses alpha-ribazole + adenosylcob(III)inamide-GDP = adenosylcob(III)alamin + GMP + H(+). It catalyses the reaction alpha-ribazole 5'-phosphate + adenosylcob(III)inamide-GDP = adenosylcob(III)alamin 5'-phosphate + GMP + H(+). Its pathway is cofactor biosynthesis; adenosylcobalamin biosynthesis; adenosylcobalamin from cob(II)yrinate a,c-diamide: step 7/7. Its function is as follows. Joins adenosylcobinamide-GDP and alpha-ribazole to generate adenosylcobalamin (Ado-cobalamin). Also synthesizes adenosylcobalamin 5'-phosphate from adenosylcobinamide-GDP and alpha-ribazole 5'-phosphate. In Vibrio cholerae serotype O1 (strain ATCC 39541 / Classical Ogawa 395 / O395), this protein is Adenosylcobinamide-GDP ribazoletransferase.